The sequence spans 32 residues: Allergen Asp fl 1 (32 aa).

This Aspergillus flavus protein is Allergen Asp fl 1.